The primary structure comprises 785 residues: Endonuclease MutS2 (785 aa).

334-341 (GPNTGGKT) provides a ligand contact to ATP. One can recognise a Smr domain in the interval 710 to 785 (LDLRGQRYDE…GNGATIVKLK (76 aa)).

This sequence belongs to the DNA mismatch repair MutS family. MutS2 subfamily. Homodimer. Binds to stalled ribosomes, contacting rRNA.

In terms of biological role, endonuclease that is involved in the suppression of homologous recombination and thus may have a key role in the control of bacterial genetic diversity. Acts as a ribosome collision sensor, splitting the ribosome into its 2 subunits. Detects stalled/collided 70S ribosomes which it binds and splits by an ATP-hydrolysis driven conformational change. Acts upstream of the ribosome quality control system (RQC), a ribosome-associated complex that mediates the extraction of incompletely synthesized nascent chains from stalled ribosomes and their subsequent degradation. Probably generates substrates for RQC. The chain is Endonuclease MutS2 from Lactobacillus helveticus (strain DPC 4571).